The sequence spans 633 residues: Endosomal/prevacuolar sodium/hydrogen exchanger (633 aa).

The signal sequence occupies residues 1–21; it reads MLSKVLLNIAFKVLLTTAKRA. Over 22–61 the chain is Lumenal; that stretch reads VDPDDDDELLPSPDLPGSDDPIAGDPDVDLNPVTEEMFSS. Residues 25–44 form a disordered region; it reads DDDDELLPSPDLPGSDDPIA. A compositionally biased stretch (low complexity) spans 31–42; the sequence is LPSPDLPGSDDP. The chain crosses the membrane as a helical span at residues 62–82; sequence WALFIMLLLLISALWSSYYLT. Residues 83 to 85 lie on the Cytoplasmic side of the membrane; sequence QKR. Residues 86-106 form a helical membrane-spanning segment; the sequence is IRAVHETVLSIFYGMVIGLII. Residues 107–117 are Lumenal-facing; that stretch reads RMSPGHYIQDT. A helical membrane pass occupies residues 118-138; it reads VTFNSSYFFNVLLPPIILNSG. The short motif at 124 to 133 is the Amiloride-binding element; it reads YFFNVLLPPI. Residues 139-152 are Cytoplasmic-facing; it reads YELNQVNFFNNMLS. The chain crosses the membrane as a helical span at residues 153-173; sequence ILIFAIPGTFISAVVIGIILY. The Lumenal portion of the chain corresponds to 174-189; that stretch reads IWTFLGLESIDISFAD. A helical transmembrane segment spans residues 190–211; the sequence is AMSVGATLSATDPVTILSIFNA. Residues 212–217 are Cytoplasmic-facing; sequence YKVDPK. The chain crosses the membrane as a helical span at residues 218–238; it reads LYTIIFGESLLNDAISIVMFE. At 239 to 258 the chain is on the lumenal side; the sequence is TCQKFHGQPATFSSVFEGAG. A helical transmembrane segment spans residues 259–279; the sequence is LFLMTFSVSLLIGVLIGILVA. Residues 280 to 288 lie on the Cytoplasmic side of the membrane; it reads LLLKHTHIR. The chain crosses the membrane as a helical span at residues 289 to 308; it reads RYPQIESCLILLIAYESYFF. Topologically, residues 309–313 are lumenal; it reads SNGCH. The helical transmembrane segment at 314 to 333 threads the bilayer; the sequence is MSGIVSLLFCGITLKHYAYY. Topologically, residues 334-344 are cytoplasmic; it reads NMSRRSQITIK. A helical transmembrane segment spans residues 345 to 364; the sequence is YIFQLLARLSENFIFIYLGL. Residues 365 to 376 are Cytoplasmic-facing; sequence ELFTEVELVYKP. A helical membrane pass occupies residues 377–397; it reads LLIIVAAISICVARWCAVFPL. At 398 to 431 the chain is on the lumenal side; it reads SQFVNWIYRVKTIRSMSGITGENISVPDEIPYNY. Asparagine 420 carries N-linked (GlcNAc...) asparagine glycosylation. A helical transmembrane segment spans residues 432 to 452; sequence QMMTFWAGLRGAVGVALALGI. The Cytoplasmic segment spans residues 453–457; sequence QGEYK. A helical membrane pass occupies residues 458–478; sequence FTLLATVLVVVVLTVIIFGGT. The residue at position 490 (threonine 490) is a Phosphothreonine. Position 494 is a phosphoserine (serine 494). Residue threonine 498 is modified to Phosphothreonine. Serine 499 bears the Phosphoserine mark. 3 N-linked (GlcNAc...) asparagine glycosylation sites follow: asparagine 515, asparagine 550, and asparagine 563. Residues 553-578 are disordered; sequence TTGGNTFGGLNETENTSPNPARSSMD. Residues 564–574 are compositionally biased toward polar residues; the sequence is ETENTSPNPAR. Residue serine 569 is modified to Phosphoserine.

It belongs to the monovalent cation:proton antiporter 1 (CPA1) transporter (TC 2.A.36) family. Interacts with CYP6.

It is found in the endosome membrane. The protein resides in the prevacuolar compartment membrane. In terms of biological role, endosomal/prevacuolar electroneutral Na(+)/H(+) exchanger which mediates intracellular sequestration of Na(+) cations, regulates vacuolar pH and contributes to osmotolerance following sudden exposure to hyperosmotic media. Also contributes to the postdiauxic/stationary phase resistance to osmotic stress and allows for the continued growth of cells until the acquired osmotolerance response can occur. Involved in hygromycin resistance probably through its influence on the electrochemical proton gradient affecting secondarily the entrance of hygromycin. Mediates pH-dependent vesicle trafficking out of the endosome. Contributes to K(+) sequestration and homeostasis. The polypeptide is Endosomal/prevacuolar sodium/hydrogen exchanger (NHX1) (Saccharomyces cerevisiae (strain ATCC 204508 / S288c) (Baker's yeast)).